We begin with the raw amino-acid sequence, 61 residues long: Beta-toxin Tce4 (61 aa).

The LCN-type CS-alpha/beta domain maps to 1–61; sequence KEGYLMDHEG…KVWEYATNRC (61 aa). 4 cysteine pairs are disulfide-bonded: Cys11–Cys61, Cys15–Cys37, Cys23–Cys42, and Cys27–Cys44. Cys61 bears the Cysteine amide mark.

It belongs to the long (4 C-C) scorpion toxin superfamily. Sodium channel inhibitor family. Beta subfamily. Expressed by the venom gland.

It localises to the secreted. In terms of biological role, beta toxins bind voltage-independently at site-4 of sodium channels (Nav) and shift the voltage of activation toward more negative potentials thereby affecting sodium channel activation and promoting spontaneous and repetitive firing. The protein is Beta-toxin Tce4 of Tityus cerroazul (Scorpion).